A 228-amino-acid polypeptide reads, in one-letter code: L-ribulose-5-phosphate 4-epimerase UlaF (228 aa).

Substrate contacts are provided by residues 26 to 27 (GN), 43 to 44 (SG), and 72 to 73 (SS). Residues Asp74, His93, and His95 each coordinate Zn(2+). Asp118 serves as the catalytic Proton donor/acceptor. Residue His167 coordinates Zn(2+). Residue Tyr225 is the Proton donor/acceptor of the active site.

The protein belongs to the aldolase class II family. AraD/FucA subfamily. It depends on Zn(2+) as a cofactor.

It carries out the reaction L-ribulose 5-phosphate = D-xylulose 5-phosphate. Its pathway is cofactor degradation; L-ascorbate degradation; D-xylulose 5-phosphate from L-ascorbate: step 4/4. Its function is as follows. Catalyzes the isomerization of L-ribulose 5-phosphate to D-xylulose 5-phosphate. Is involved in the anaerobic L-ascorbate utilization. The sequence is that of L-ribulose-5-phosphate 4-epimerase UlaF from Escherichia coli O81 (strain ED1a).